The sequence spans 880 residues: DNA mismatch repair protein MutS (880 aa).

624–631 is a binding site for ATP; that stretch reads GPNMAGKS.

This sequence belongs to the DNA mismatch repair MutS family.

Its function is as follows. This protein is involved in the repair of mismatches in DNA. It is possible that it carries out the mismatch recognition step. This protein has a weak ATPase activity. The protein is DNA mismatch repair protein MutS of Alkaliphilus metalliredigens (strain QYMF).